The primary structure comprises 138 residues: F-box protein At4g12382 (138 aa).

An F-box domain is found at 7 to 53 (NPSFADLPSSLIEVIMSHLALKNNIRASAACKSWYEVGVSVRVVEKH).

The sequence is that of F-box protein At4g12382 from Arabidopsis thaliana (Mouse-ear cress).